The sequence spans 100 residues: Large ribosomal subunit protein bL28 (100 aa).

This sequence belongs to the bacterial ribosomal protein bL28 family.

The polypeptide is Large ribosomal subunit protein bL28 (Ehrlichia chaffeensis (strain ATCC CRL-10679 / Arkansas)).